The sequence spans 44 residues: Photosystem I reaction center subunit IX (44 aa).

Residues 7 to 27 (YLSVAPVLTTLWFGSLAGLLI) form a helical membrane-spanning segment.

It belongs to the PsaJ family.

The protein localises to the plastid. It is found in the chloroplast thylakoid membrane. Its function is as follows. May help in the organization of the PsaE and PsaF subunits. The polypeptide is Photosystem I reaction center subunit IX (Drimys granadensis).